A 314-amino-acid chain; its full sequence is Coproporphyrin III ferrochelatase (314 aa).

Residues His186 and Glu268 each contribute to the Fe(2+) site.

It belongs to the ferrochelatase family.

It localises to the cytoplasm. The catalysed reaction is Fe-coproporphyrin III + 2 H(+) = coproporphyrin III + Fe(2+). The protein operates within porphyrin-containing compound metabolism; protoheme biosynthesis. Its function is as follows. Involved in coproporphyrin-dependent heme b biosynthesis. Catalyzes the insertion of ferrous iron into coproporphyrin III to form Fe-coproporphyrin III. The protein is Coproporphyrin III ferrochelatase of Lactococcus lactis subsp. lactis (strain IL1403) (Streptococcus lactis).